Consider the following 458-residue polypeptide: Probable M18 family aminopeptidase 1 (458 aa).

Residues H95, H170, and H434 each coordinate Zn(2+).

The protein belongs to the peptidase M18 family. Zn(2+) is required as a cofactor.

This Borrelia garinii subsp. bavariensis (strain ATCC BAA-2496 / DSM 23469 / PBi) (Borreliella bavariensis) protein is Probable M18 family aminopeptidase 1.